The following is a 335-amino-acid chain: Pro-cathepsin H (335 aa).

The first 22 residues, M1–A22, serve as a signal peptide directing secretion. Residues A23–S97 constitute a propeptide, activation peptide. Residues N72 and N101 are each glycosylated (N-linked (GlcNAc...) asparagine). 4 disulfide bridges follow: C102/C327, C138/C181, C172/C214, and C272/C322. A propeptide spanning residues K106–P115 is cleaved from the precursor. C141 is a catalytic residue. Residue N230 is glycosylated (N-linked (GlcNAc...) asparagine). Active-site residues include H281 and N301.

This sequence belongs to the peptidase C1 family. Composed of a mini chain and a large chain. The large chain may be split into heavy and light chain. All chains are held together by disulfide bonds.

The protein localises to the lysosome. It catalyses the reaction Hydrolysis of proteins, acting as an aminopeptidase (notably, cleaving Arg-|-Xaa bonds) as well as an endopeptidase.. Functionally, important for the overall degradation of proteins in lysosomes. The sequence is that of Pro-cathepsin H (CTSH) from Bos taurus (Bovine).